Here is a 219-residue protein sequence, read N- to C-terminus: Ras-related protein Rab-3B (219 aa).

Alanine 2 bears the N-acetylalanine mark. GTP-binding residues include serine 31, serine 32, valine 33, glycine 34, lysine 35, threonine 36, serine 37, proline 49, and serine 53. A GDP-binding site is contributed by serine 32. The GDP site is built by glycine 34, lysine 35, threonine 36, and serine 37. Threonine 36 lines the Mg(2+) pocket. The Switch 1 motif lies at 45–58; the sequence is DTFTPAFVSTVGID. Residues threonine 54 and aspartate 77 each coordinate Mg(2+). The Switch 2 signature appears at 78–96; that stretch reads TAGQERYRTITTAYYRGAM. Glycine 80 is a GTP binding site. Threonine 86 carries the post-translational modification Phosphothreonine; by LRRK2. Residues asparagine 135, lysine 136, and aspartate 138 each coordinate GTP. GDP contacts are provided by asparagine 135, lysine 136, aspartate 138, methionine 139, alanine 166, and lysine 167. GTP contacts are provided by alanine 166 and lysine 167. Residues serine 188 and serine 190 each carry the phosphoserine modification. 2 S-geranylgeranyl cysteine lipidation sites follow: cysteine 217 and cysteine 219. Position 219 is a cysteine methyl ester (cysteine 219).

It belongs to the small GTPase superfamily. Rab family. Interacts with RIMS1, RIMS2, RPH3A and RPH3AL. The GTP-bound form interacts with GAS8/DRC4 (via coiled-coil domains). The GTP-bound form interacts with REP15. Interacts with GDI2, CHM and CHML; phosphorylation at Thr-86 disrupts these interactions. Interacts with MADD (via uDENN domain); the GTP-bound form is preferred for interaction. Mg(2+) serves as cofactor. Post-translationally, phosphorylation of Thr-86 in the switch II region by LRRK2 prevents the association of RAB regulatory proteins, including CHM, CHML and RAB GDP dissociation inhibitor GDI2.

The protein localises to the cell membrane. The protein resides in the golgi apparatus. It carries out the reaction GTP + H2O = GDP + phosphate + H(+). Its activity is regulated as follows. Regulated by guanine nucleotide exchange factors (GEFs) which promote the exchange of bound GDP for free GTP. Regulated by GTPase activating proteins (GAPs) which increase the GTP hydrolysis activity. Inhibited by GDP dissociation inhibitors (GDIs) which prevent Rab-GDP dissociation. The small GTPases Rab are key regulators of intracellular membrane trafficking, from the formation of transport vesicles to their fusion with membranes. Rabs cycle between an inactive GDP-bound form and an active GTP-bound form that is able to recruit to membranes different sets of downstream effectors directly responsible for vesicle formation, movement, tethering and fusion. The protein is Ras-related protein Rab-3B of Homo sapiens (Human).